A 146-amino-acid polypeptide reads, in one-letter code: uncharacterized protein (146 aa).

A helical membrane pass occupies residues 7 to 24; the sequence is VIALFLVTGLTLYAIRLL.

The protein resides in the membrane. This is an uncharacterized protein from Haemophilus influenzae (strain ATCC 51907 / DSM 11121 / KW20 / Rd).